Here is a 207-residue protein sequence, read N- to C-terminus: dTTP/UTP pyrophosphatase (207 aa).

Residue Asp-87 is the Proton acceptor of the active site.

It belongs to the Maf family. YhdE subfamily. The cofactor is a divalent metal cation.

It localises to the cytoplasm. It carries out the reaction dTTP + H2O = dTMP + diphosphate + H(+). It catalyses the reaction UTP + H2O = UMP + diphosphate + H(+). Its function is as follows. Nucleoside triphosphate pyrophosphatase that hydrolyzes dTTP and UTP. May have a dual role in cell division arrest and in preventing the incorporation of modified nucleotides into cellular nucleic acids. This chain is dTTP/UTP pyrophosphatase, found in Bordetella pertussis (strain Tohama I / ATCC BAA-589 / NCTC 13251).